The primary structure comprises 356 residues: DNA integrity scanning protein DisA (356 aa).

In terms of domain architecture, DAC spans 11-149; sequence VHTMRDTLQR…EGKSHILEEP (139 aa). ATP-binding positions include G78, L96, and 109-113; that span reads TRHRS.

It belongs to the DisA family. As to quaternary structure, homooctamer. Mg(2+) is required as a cofactor.

The catalysed reaction is 2 ATP = 3',3'-c-di-AMP + 2 diphosphate. Participates in a DNA-damage check-point. DisA forms globular foci that rapidly scan along the chromosomes searching for lesions. Its function is as follows. Also has diadenylate cyclase activity, catalyzing the condensation of 2 ATP molecules into cyclic di-AMP (c-di-AMP). c-di-AMP likely acts as a signaling molecule that may couple DNA integrity with a cellular process. In Corynebacterium efficiens (strain DSM 44549 / YS-314 / AJ 12310 / JCM 11189 / NBRC 100395), this protein is DNA integrity scanning protein DisA.